Reading from the N-terminus, the 176-residue chain is Trypsin inhibitor 1B (176 aa).

Disulfide bonds link C39-C83 and C132-C143.

Belongs to the protease inhibitor I3 (leguminous Kunitz-type inhibitor) family.

In terms of biological role, inhibits trypsin stoichiometrically. The sequence is that of Trypsin inhibitor 1B from Erythrina variegata (Indian coral tree).